Reading from the N-terminus, the 294-residue chain is MKQTTISKKVEGVGIGLHKGEPIKLILEPLEANMGIVFYRSDLGSSFKAEPKNVINTQMATVVGNEKGSVSTIEHLLSAINSYGIDNIRIVLDANEVPVMDGSAISFCMMLDEAGVIELEADKKVIVVKKEVEVRDGDKYVKVTPSKNPKFNYTIKFENPIIGKQSYTFEFSKENFLNEIARARTFGFLKDVQKLNSMGLALGGSLDNAVVIDDSRILNPEGLRFENEFVRHKILDAIGDISLLGAPMVGDYEAYAGSHDLNHKLTVALLSDEKNYEMVTLDEQKAKEYAKAFA.

Zn(2+) contacts are provided by histidine 75, histidine 232, and aspartate 236. Histidine 259 acts as the Proton donor in catalysis.

It belongs to the LpxC family. Requires Zn(2+) as cofactor.

The enzyme catalyses a UDP-3-O-[(3R)-3-hydroxyacyl]-N-acetyl-alpha-D-glucosamine + H2O = a UDP-3-O-[(3R)-3-hydroxyacyl]-alpha-D-glucosamine + acetate. The protein operates within glycolipid biosynthesis; lipid IV(A) biosynthesis; lipid IV(A) from (3R)-3-hydroxytetradecanoyl-[acyl-carrier-protein] and UDP-N-acetyl-alpha-D-glucosamine: step 2/6. In terms of biological role, catalyzes the hydrolysis of UDP-3-O-myristoyl-N-acetylglucosamine to form UDP-3-O-myristoylglucosamine and acetate, the committed step in lipid A biosynthesis. In Campylobacter fetus subsp. fetus (strain 82-40), this protein is UDP-3-O-acyl-N-acetylglucosamine deacetylase.